Here is a 199-residue protein sequence, read N- to C-terminus: MAKVLVLYYSTYGHLETMANAVAEGARAAGATVDVKRVPETAPDEVAKAAHFKLDQAAPVATIADLEHYDAIIVGAPTRFGRIASQMAAFLDQAGGLWFRGALNGKVGAAFTSTATQHGGQETTLFSIITNLLHFGMVIVGLPYSHQGQMSMSEIVGGAPYGATTLAAGDGSRQPSEIDLAGARHQGELVAKTAAKLFG.

In terms of domain architecture, Flavodoxin-like spans 4-190 (VLVLYYSTYG…AGARHQGELV (187 aa)). FMN-binding positions include 10–15 (STYGHL) and 78–80 (TRF). Position 12 (Y12) interacts with NAD(+). W98 is a binding site for substrate. Residues 113-119 (STATQHG) and H134 contribute to the FMN site.

It belongs to the WrbA family. FMN is required as a cofactor.

It carries out the reaction a quinone + NADH + H(+) = a quinol + NAD(+). It catalyses the reaction a quinone + NADPH + H(+) = a quinol + NADP(+). The chain is NAD(P)H dehydrogenase (quinone) from Azorhizobium caulinodans (strain ATCC 43989 / DSM 5975 / JCM 20966 / LMG 6465 / NBRC 14845 / NCIMB 13405 / ORS 571).